Consider the following 487-residue polypeptide: Lysophospholipid acyltransferase 5 (487 aa).

At Ala2 the chain carries N-acetylalanine. Helical transmembrane passes span 44-64 (LIFS…YLFY), 84-104 (FNFG…FLIL), 111-131 (VTAV…GYYY), and 180-200 (GVPS…FLVG). An N-linked (GlcNAc...) asparagine glycan is attached at Asn225. The next 2 membrane-spanning stretches (helical) occupy residues 236–256 (LGLV…DDYL) and 285–305 (VTCW…FNGF). Residues Asn308 and Asn331 are each glycosylated (N-linked (GlcNAc...) asparagine). Active-site residues include Asn338 and His374. Helical transmembrane passes span 364-384 (GLSL…LICF), 422-442 (LVQQ…FCLF), and 453-473 (SIYF…PYIH). Residues 484-487 (KKRE) carry the Di-lysine motif motif.

Belongs to the membrane-bound acyltransferase family. Detected ubiquitously, with high expression levels in small intestine, brown adipose tissue, liver, kidney and testis. Expressed in liver and both proximal and distal small intestine (at protein level). Expressed in peritoneal macrophages.

The protein localises to the endoplasmic reticulum membrane. It carries out the reaction a 1-acyl-sn-glycero-3-phosphocholine + an acyl-CoA = a 1,2-diacyl-sn-glycero-3-phosphocholine + CoA. The enzyme catalyses a 1-acyl-sn-glycero-3-phosphoethanolamine + an acyl-CoA = a 1,2-diacyl-sn-glycero-3-phosphoethanolamine + CoA. The catalysed reaction is a 1-acyl-sn-glycero-3-phospho-L-serine + an acyl-CoA = a 1,2-diacyl-sn-glycero-3-phospho-L-serine + CoA. It catalyses the reaction (9Z,12Z)-octadecadienoyl-CoA + a 1-acyl-sn-glycero-3-phosphocholine = 1-acyl-2-(9Z,12Z)-octadecadienoyl-sn-glycero-3-phosphocholine + CoA. It carries out the reaction (5Z,8Z,11Z,14Z)-eicosatetraenoyl-CoA + a 1-acyl-sn-glycero-3-phosphocholine = 1-acyl-2-(5Z,8Z,11Z,14Z-eicosatetraenoyl)-sn-glycero-3-phosphocholine + CoA. The enzyme catalyses dodecanoyl-CoA + 1-hexadecanoyl-sn-glycero-3-phosphocholine = 1-hexadecanoyl-2-dodecanoyl-sn-glycero-3-phosphocholine + CoA. The catalysed reaction is octadecanoyl-CoA + 1-hexadecanoyl-sn-glycero-3-phosphocholine = 1-hexadecanoyl-2-octadecanoyl-sn-glycero-3-phosphocholine + CoA. It catalyses the reaction 1-dodecanoyl-sn-glycero-3-phosphocholine + hexadecanoyl-CoA = 1-dodecanoyl-2-hexadecanoyl-sn-glycero-3-phosphocholine + CoA. It carries out the reaction 1-tetradecanoyl-sn-glycero-3-phosphocholine + hexadecanoyl-CoA = 1-tetradecanoyl-2-hexadecanoyl-sn-glycero-3-phosphocholine + CoA. The enzyme catalyses 1-hexadecanoyl-sn-glycero-3-phosphocholine + hexadecanoyl-CoA = 1,2-dihexadecanoyl-sn-glycero-3-phosphocholine + CoA. The catalysed reaction is 1-octadecanoyl-sn-glycero-3-phosphocholine + hexadecanoyl-CoA = 1-octadecanoyl-2-hexadecanoyl-sn-glycero-3-phosphocholine + CoA. It catalyses the reaction 1-(9Z-octadecenoyl)-sn-glycero-3-phosphocholine + hexadecanoyl-CoA = 1-(9Z-octadecenoyl)-2-hexadecanoyl-sn-glycero-3-phosphocholine + CoA. It carries out the reaction (9Z)-hexadecenoyl-CoA + 1-hexadecanoyl-sn-glycero-3-phosphocholine = 1-hexadecanoyl-2-(9Z-hexadecenoyl)-sn-glycero-3-phosphocholine + CoA. The enzyme catalyses 1-hexadecanoyl-sn-glycero-3-phosphocholine + (9Z)-octadecenoyl-CoA = 1-hexadecanoyl-2-(9Z-octadecenoyl)-sn-glycero-3-phosphocholine + CoA. The catalysed reaction is (9Z,12Z)-octadecadienoyl-CoA + 1-hexadecanoyl-sn-glycero-3-phosphocholine = 1-hexadecanoyl-2-(9Z,12Z-octadecadienoyl)-sn-glycero-3-phosphocholine + CoA. It catalyses the reaction 1-dodecanoyl-sn-glycero-3-phosphocholine + (5Z,8Z,11Z,14Z)-eicosatetraenoyl-CoA = 1-dodecanoyl-2-(5Z,8Z,11Z,14Z)-eicosatetraenoyl-sn-glycero-3-phosphocholine + CoA. It carries out the reaction (5Z,8Z,11Z,14Z)-eicosatetraenoyl-CoA + 1-hexadecanoyl-sn-glycero-3-phosphocholine = 1-hexadecanoyl-2-(5Z,8Z,11Z,14Z-eicosatetraenoyl)-sn-glycero-3-phosphocholine + CoA. The enzyme catalyses 1-octadecanoyl-sn-glycero-3-phosphocholine + (5Z,8Z,11Z,14Z)-eicosatetraenoyl-CoA = 1-octadecanoyl-2-(5Z,8Z,11Z,14Z-eicosatetraenoyl)-sn-glycero-3-phosphocholine + CoA. The catalysed reaction is 1-eicosanoyl-sn-glycero-3-phosphocholine + (5Z,8Z,11Z,14Z)-eicosatetraenoyl-CoA = 1-eicosanoyl-2-(5Z,8Z,11Z,14Z)-eicosatetraenoyl-sn-glycero-3-phosphocholine + CoA. It catalyses the reaction 1-(9Z-octadecenoyl)-sn-glycero-3-phosphocholine + (9Z)-octadecenoyl-CoA = 1,2-di-(9Z-octadecenoyl)-sn-glycero-3-phosphocholine + CoA. It carries out the reaction 1-(9Z-octadecenoyl)-sn-glycero-3-phosphocholine + (9Z,12Z)-octadecadienoyl-CoA = 1-(9Z)-octadecenoyl-2-(9Z,12Z)-octadecadienoyl-sn-glycero-3-phosphocholine + CoA. The enzyme catalyses 1-(9Z-octadecenoyl)-sn-glycero-3-phosphocholine + (5Z,8Z,11Z,14Z)-eicosatetraenoyl-CoA = 1-(9Z)-octadecenoyl-2-(5Z,8Z,11Z,14Z)-icosatetraenoyl-sn-glycero-3-phosphocholine + CoA. The catalysed reaction is a 1-acyl-sn-glycero-3-phosphoethanolamine + (9Z,12Z)-octadecadienoyl-CoA = 1-acyl-2-(9Z,12Z)-octadecadienoyl-sn-glycero-3-phosphoethanolamine + CoA. It catalyses the reaction 1-(9Z-octadecenoyl)-sn-glycero-3-phosphoethanolamine + (9Z,12Z)-octadecadienoyl-CoA = 1-(9Z)-octadecenoyl-2-(9Z,12Z)-octadecadienoyl-sn-glycero-3-phosphoethanolamine + CoA. It carries out the reaction 1-(10Z-heptadecenoyl)-sn-glycero-3-phosphoethanolamine + (9Z,12Z)-octadecadienoyl-CoA = 1-(10Z-heptadecenoyl)-2-(9Z,12Z-octadecadienoyl)-sn-glycero-3-phosphoethanolamine + CoA. The enzyme catalyses a 1-acyl-sn-glycero-3-phosphoethanolamine + (5Z,8Z,11Z,14Z)-eicosatetraenoyl-CoA = 1-acyl-2-(5Z,8Z,11Z,14Z)-eicosatetraenoyl-sn-glycero-3-phosphoethanolamine + CoA. The catalysed reaction is 1-hexadecanoyl-sn-glycero-3-phosphoethanolamine + (5Z,8Z,11Z,14Z)-eicosatetraenoyl-CoA = 1-hexadecanoyl-2-(5Z,8Z,11Z,14Z-eicosatetraenoyl)-sn-glycero-3-phosphoethanolamine + CoA. It catalyses the reaction 1-(9Z-octadecenoyl)-sn-glycero-3-phosphoethanolamine + (5Z,8Z,11Z,14Z)-eicosatetraenoyl-CoA = 1-(9Z)-octadecenoyl-2-(5Z,8Z,11Z,14Z)-eicosatetraenoyl-sn-glycero-3-phosphoethanolamine + CoA. It carries out the reaction 1-(10Z-heptadecenoyl)-sn-glycero-3-phosphoethanolamine + (5Z,8Z,11Z,14Z)-eicosatetraenoyl-CoA = 1-(10Z-heptadecenoyl)-2-(5Z,8Z,11Z,14Z-eicosatetraenoyl)-sn-glycero-3-phosphoethanolamine + CoA. The enzyme catalyses a 1-O-(1Z-alkenyl)-sn-glycero-3-phosphoethanolamine + (5Z,8Z,11Z,14Z)-eicosatetraenoyl-CoA = 1-O-(1Z)-alkenyl-2-(5Z,8Z,11Z,14Z)-eicosatetraenoyl-sn-glycero-3-phosphoethanolamine + CoA. The catalysed reaction is a 1-acyl-sn-glycero-3-phospho-L-serine + (9Z,12Z)-octadecadienoyl-CoA = 1-acyl-2-(9Z,12Z-octadecadienoyl)-sn-glycero-3-phospho-L-serine + CoA. It catalyses the reaction a 1-acyl-sn-glycero-3-phospho-L-serine + (5Z,8Z,11Z,14Z)-eicosatetraenoyl-CoA = 1-acyl-2-(5Z,8Z,11Z,14Z-eicosatetraenoyl)-sn-glycero-3-phospho-L-serine + CoA. It carries out the reaction 1-hexadecanoyl-sn-glycero-3-phospho-L-serine + (9Z)-octadecenoyl-CoA = 1-hexadecanoyl-2-(9Z-octadecenoyl)-sn-glycero-3-phospho-L-serine + CoA. The enzyme catalyses 1-(9Z-octadecenoyl)-sn-glycero-3-phospho-L-serine + (9Z)-octadecenoyl-CoA = 1,2-di-(9Z)-octadecenoyl-sn-glycero-3-phospho-L-serine + CoA. The catalysed reaction is 1-hexadecanoyl-sn-glycero-3-phospho-L-serine + (9Z,12Z)-octadecadienoyl-CoA = 1-hexadecanoyl-2-(9Z,12Z-octadecadienoyl)-sn-glycero-3-phospho-L-serine + CoA. It catalyses the reaction 1-(9Z-octadecenoyl)-sn-glycero-3-phospho-L-serine + (9Z,12Z)-octadecadienoyl-CoA = 1-(9Z-octadecenoyl)-2-(9Z,12Z-octadienoyl)-sn-glycero-3-phospho-L-serine + CoA. It carries out the reaction 1-hexadecanoyl-sn-glycero-3-phospho-L-serine + (5Z,8Z,11Z,14Z)-eicosatetraenoyl-CoA = 1-hexadecanoyl-2-(5Z,8Z,11Z,14Z-eicosatetraenoyl)-sn-glycero-3-phospho-L-serine + CoA. The enzyme catalyses 1-(9Z-octadecenoyl)-sn-glycero-3-phospho-L-serine + (5Z,8Z,11Z,14Z)-eicosatetraenoyl-CoA = 1-(9Z-octadecenoyl)-2-(5Z,8Z,11Z,14Z-eicosatetraenoyl)-sn-glycero-3-phospho-L-serine + CoA. It functions in the pathway lipid metabolism; phospholipid metabolism. Lysophospholipid O-acyltransferase (LPLAT) that catalyzes the reacylation step of the phospholipid remodeling process also known as the Lands cycle. Catalyzes transfer of the fatty acyl chain from fatty acyl-CoA to 1-acyl lysophospholipid to form various classes of phospholipids. Converts 1-acyl lysophosphatidylcholine (LPC) into phosphatidylcholine (PC) (LPCAT activity), 1-acyl lysophosphatidylserine (LPS) into phosphatidylserine (PS) (LPSAT activity) and 1-acyl lysophosphatidylethanolamine (LPE) into phosphatidylethanolamine (PE) (LPEAT activity). Favors polyunsaturated fatty acyl-CoAs as acyl donors compared to saturated fatty acyl-CoAs. Has higher activity for LPC acyl acceptors compared to LPEs and LPSs. Can also transfer the fatty acyl chain from fatty acyl-CoA to 1-O-alkyl lysophospholipid or 1-O-alkenyl lysophospholipid with lower efficiency. Acts as a major LPC O-acyltransferase in liver and intestine. As a component of the liver X receptor/NR1H3 or NR1H2 signaling pathway, mainly catalyzes the incorporation of arachidonate into PCs of endoplasmic reticulum (ER) membranes, increasing membrane dynamics and enabling triacylglycerols transfer to nascent very low-density lipoprotein (VLDL) particles. Promotes processing of sterol regulatory protein SREBF1 in hepatocytes, likely by facilitating the translocation of SREBF1-SCAP complex from ER to the Golgi apparatus. Participates in mechanisms by which the liver X receptor/NR1H3 or NR1H2 signaling pathway counteracts lipid-induced ER stress response and inflammation. Down-regulates hepatic inflammation by limiting arachidonic acid availability for synthesis of inflammatory eicosanoids, such as prostaglandins. In enterocytes, acts as a component of a gut-brain feedback loop that coordinates dietary lipid absorption and food intake. Regulates the abundance of PCs containing linoleate and arachidonate in enterocyte membranes, enabling passive diffusion of fatty acids and cholesterol across the membrane for efficient chylomicron assembly. In the intestinal crypt, acts as a component of dietary-responsive phospholipid-cholesterol axis, regulating the biosynthesis of cholesterol and its mitogenic effects on intestinal stem cells. This Mus musculus (Mouse) protein is Lysophospholipid acyltransferase 5 (Lpcat3).